A 444-amino-acid polypeptide reads, in one-letter code: tRNA-2-methylthio-N(6)-dimethylallyladenosine synthase (444 aa).

The region spanning 10–126 (SSFYIHTFGC…LAGLVAGLRE (117 aa)) is the MTTase N-terminal domain. The [4Fe-4S] cluster site is built by C19, C55, C89, C163, C167, and C170. Positions 149–379 (RAGSISAFLP…IELQNAISRE (231 aa)) constitute a Radical SAM core domain. The region spanning 382–444 (QREIGKTVEV…TSATLSGEAV (63 aa)) is the TRAM domain.

Belongs to the methylthiotransferase family. MiaB subfamily. Monomer. The cofactor is [4Fe-4S] cluster.

It localises to the cytoplasm. It carries out the reaction N(6)-dimethylallyladenosine(37) in tRNA + (sulfur carrier)-SH + AH2 + 2 S-adenosyl-L-methionine = 2-methylsulfanyl-N(6)-dimethylallyladenosine(37) in tRNA + (sulfur carrier)-H + 5'-deoxyadenosine + L-methionine + A + S-adenosyl-L-homocysteine + 2 H(+). Catalyzes the methylthiolation of N6-(dimethylallyl)adenosine (i(6)A), leading to the formation of 2-methylthio-N6-(dimethylallyl)adenosine (ms(2)i(6)A) at position 37 in tRNAs that read codons beginning with uridine. The protein is tRNA-2-methylthio-N(6)-dimethylallyladenosine synthase of Chlorobaculum tepidum (strain ATCC 49652 / DSM 12025 / NBRC 103806 / TLS) (Chlorobium tepidum).